A 644-amino-acid polypeptide reads, in one-letter code: MAKIIGIDLGTTNSCVAVMEGDKPKVIENSEGHRTTPSIVAFTDDNEILVGQSAKRQSVTNPEKTLFAIKRLIGRRFDDPIVQKDIKMVPYKIMKADNGDAWVRVKDQDKAPPQISAEVLRKMKKTAEDYLGEEVKEAVITVPAYFNDSQRQATKDAGRIAGLEVKRIINEPTAAALAYGMDKKRGDSVIAVYDLGGGTFDISIIEIAEVDGEHQFEVLATNGDTFLGGEDFDLALIEYLASEFKKDTGIDLHNDPLALQRLKEAAEKAKIELSSAQQTDVNLPYITADASGPKHLNIKLTRAKLESLVEKLVERTIEPCKTALKDAGLTVSQINEVILVGGQTRMPLVQKTVEEFFGKEPRKDVNPDEAVAVGAAIQAAVLSGEVKDILLLDVTPLSLGIETMGGVMTKLIEKNTTIPTKATQVFSTADDNQTAVTVHVLQGEREQASANKSLGRFDLRDIPPAPRGVPQIEVTFDIDANGILNVSAKDKATGKAQSIVIKASSGLSEEEVAAMVKDAQSHAEEDKKFKEMAELRNQADSLIHSCEKSMKDLADELSEDEKRGIETAISELKEAVQGTDKARIEDKLKVLTDASAKMAERIYAKKSSEGQAAQGQTQSQESTKPAEEGVVDAEFEEVKEEDKK.

At T199 the chain carries Phosphothreonine; by autocatalysis. The interval 605–644 is disordered; it reads KKSSEGQAAQGQTQSQESTKPAEEGVVDAEFEEVKEEDKK. Residues 609–623 are compositionally biased toward polar residues; sequence EGQAAQGQTQSQEST. A compositionally biased stretch (acidic residues) spans 629 to 644; it reads GVVDAEFEEVKEEDKK.

This sequence belongs to the heat shock protein 70 family.

Acts as a chaperone. In Legionella pneumophila subsp. pneumophila (strain Philadelphia 1 / ATCC 33152 / DSM 7513), this protein is Chaperone protein DnaK.